The chain runs to 469 residues: MSEVLSPMTAISTKPAPRVGFVSLGCPKALTDSELILTQLSAEGYQTSKTFEGADLVIVNTCGFIDDAVKESLDTIGEALAENGRVIVTGCLGAKGGEGAGNLVRQMHPSVLAVTGPHATQEVMDAVHLNLPKPHDPFVDLVPNAFGIAGIKLTPKHYAYLKISEGCNHRCTFCIIPSMRGDLVSRPIGDVLNEARALFEGGVKELLVISQDTSAYGVDVKYRTGFWDGKPVKTRMLELVQALGDIAEPYGAWVRLHYVYPYPSVDEVLPLMATGKVLPYLDVPLQHSHPDVLKRMKRPASGEKNLERIARWREICPEIVIRSTFIAGFPGETEAEFAHLLEFMREARIDRAGCFAYSAVEGATANDIPGMLPLEVREERRARFMAVAEEVSSLKLQQRVGATMQVLVDSAPALGRKGGTGRSYADAPEIDGVVKLLPPEKISKTLKVGEFTRARIVGTQGHDLVAIPV.

The MTTase N-terminal domain maps to Pro17 to Pro132. [4Fe-4S] cluster-binding residues include Cys26, Cys62, Cys91, Cys167, Cys171, and Cys174. Positions Leu153 to Lys395 constitute a Radical SAM core domain. Positions Gln397–Val469 constitute a TRAM domain.

The protein belongs to the methylthiotransferase family. RimO subfamily. The cofactor is [4Fe-4S] cluster.

The protein resides in the cytoplasm. The catalysed reaction is L-aspartate(89)-[ribosomal protein uS12]-hydrogen + (sulfur carrier)-SH + AH2 + 2 S-adenosyl-L-methionine = 3-methylsulfanyl-L-aspartate(89)-[ribosomal protein uS12]-hydrogen + (sulfur carrier)-H + 5'-deoxyadenosine + L-methionine + A + S-adenosyl-L-homocysteine + 2 H(+). Catalyzes the methylthiolation of an aspartic acid residue of ribosomal protein uS12. The polypeptide is Ribosomal protein uS12 methylthiotransferase RimO (Polaromonas sp. (strain JS666 / ATCC BAA-500)).